Consider the following 196-residue polypeptide: Small ribosomal subunit protein uS4c (196 aa).

Residues 16 to 36 (GALPGLTRKTPKSGSNLKKKF) form a disordered region. One can recognise an S4 RNA-binding domain in the interval 89-169 (MRLDNILFRL…LPKHLTIDTL (81 aa)).

Belongs to the universal ribosomal protein uS4 family. In terms of assembly, part of the 30S ribosomal subunit. Contacts protein S5. The interaction surface between S4 and S5 is involved in control of translational fidelity.

Its subcellular location is the plastid. The protein resides in the chloroplast. Functionally, one of the primary rRNA binding proteins, it binds directly to 16S rRNA where it nucleates assembly of the body of the 30S subunit. Its function is as follows. With S5 and S12 plays an important role in translational accuracy. The sequence is that of Small ribosomal subunit protein uS4c (rps4) from Brachypodium pinnatum (Tor grass).